Reading from the N-terminus, the 276-residue chain is uncharacterized protein (276 aa).

This is an uncharacterized protein from Acanthamoeba polyphaga mimivirus (APMV).